Reading from the N-terminus, the 672-residue chain is Ubiquitin carboxyl-terminal hydrolase 19 (672 aa).

Residues 11–31 (NSFTQLILTLFFVSIGLLYFV) traverse the membrane as a helical segment. Zn(2+)-binding residues include Cys-64, Cys-67, Cys-75, Cys-78, Cys-84, Cys-88, His-97, and Cys-101. The segment at 64–101 (CSVCGKATTKKCSRCKSVRYCSAACQTSDWKSGHKLKC) adopts an MYND-type zinc-finger fold. The region spanning 174–480 (CGLTNCGNSC…RAYMLLYSRV (307 aa)) is the USP domain. The active-site Nucleophile is the Cys-183. Catalysis depends on His-439, which acts as the Proton acceptor. The disordered stretch occupies residues 484–672 (PSNLRSEESQ…HSDTEMIDAQ (189 aa)). A compositionally biased stretch (basic and acidic residues) spans 488 to 499 (RSEESQDEKKTD). A compositionally biased stretch (polar residues) spans 500–527 (TLNTESNQDGSVESSGVGTNDTSVSSLC). 2 stretches are compositionally biased toward basic and acidic residues: residues 533 to 543 (HSEDPEYEKES) and 553 to 594 (EEGK…KEDP). The segment covering 606-615 (LDITTPSPSA) has biased composition (polar residues). Residues 623–666 (ENERSDTESKPLEKEHSDTESNKPLEKEHLDSESKPLEKEHSDT) are compositionally biased toward basic and acidic residues.

Belongs to the peptidase C19 family.

The protein localises to the membrane. The enzyme catalyses Thiol-dependent hydrolysis of ester, thioester, amide, peptide and isopeptide bonds formed by the C-terminal Gly of ubiquitin (a 76-residue protein attached to proteins as an intracellular targeting signal).. Recognizes and hydrolyzes the peptide bond at the C-terminal Gly of ubiquitin. Involved in the processing of poly-ubiquitin precursors as well as that of ubiquitinated proteins. This is Ubiquitin carboxyl-terminal hydrolase 19 (UBP19) from Arabidopsis thaliana (Mouse-ear cress).